A 295-amino-acid polypeptide reads, in one-letter code: Lipoyl synthase (295 aa).

Positions 34, 39, 45, 60, 64, 67, and 273 each coordinate [4Fe-4S] cluster. In terms of domain architecture, Radical SAM core spans 46–262; sequence WNKRHATIMI…KLMAYAKGFS (217 aa).

It belongs to the radical SAM superfamily. Lipoyl synthase family. It depends on [4Fe-4S] cluster as a cofactor.

Its subcellular location is the cytoplasm. It carries out the reaction [[Fe-S] cluster scaffold protein carrying a second [4Fe-4S](2+) cluster] + N(6)-octanoyl-L-lysyl-[protein] + 2 oxidized [2Fe-2S]-[ferredoxin] + 2 S-adenosyl-L-methionine + 4 H(+) = [[Fe-S] cluster scaffold protein] + N(6)-[(R)-dihydrolipoyl]-L-lysyl-[protein] + 4 Fe(3+) + 2 hydrogen sulfide + 2 5'-deoxyadenosine + 2 L-methionine + 2 reduced [2Fe-2S]-[ferredoxin]. It functions in the pathway protein modification; protein lipoylation via endogenous pathway; protein N(6)-(lipoyl)lysine from octanoyl-[acyl-carrier-protein]: step 2/2. Its function is as follows. Catalyzes the radical-mediated insertion of two sulfur atoms into the C-6 and C-8 positions of the octanoyl moiety bound to the lipoyl domains of lipoate-dependent enzymes, thereby converting the octanoylated domains into lipoylated derivatives. This is Lipoyl synthase from Anaplasma marginale (strain St. Maries).